Reading from the N-terminus, the 341-residue chain is Phenylalanine--tRNA ligase alpha subunit (341 aa).

Glu256 provides a ligand contact to Mg(2+).

Belongs to the class-II aminoacyl-tRNA synthetase family. Phe-tRNA synthetase alpha subunit type 1 subfamily. As to quaternary structure, tetramer of two alpha and two beta subunits. Mg(2+) is required as a cofactor.

It is found in the cytoplasm. It carries out the reaction tRNA(Phe) + L-phenylalanine + ATP = L-phenylalanyl-tRNA(Phe) + AMP + diphosphate + H(+). In Leptospira interrogans serogroup Icterohaemorrhagiae serovar Lai (strain 56601), this protein is Phenylalanine--tRNA ligase alpha subunit.